The chain runs to 213 residues: GrpE protein homolog, mitochondrial (213 aa).

A disordered region spans residues 35–55 (STEKQPEEATEQKATESSPEV). Positions 38-55 (KQPEEATEQKATESSPEV) are enriched in basic and acidic residues.

This sequence belongs to the GrpE family. Probable component of the PAM complex at least composed of a mitochondrial HSP70 protein, Roe1, TIM44, blp/TIM16 and TIM14.

The protein resides in the mitochondrion matrix. Its function is as follows. Essential component of the PAM complex, a complex required for the translocation of transit peptide-containing proteins from the inner membrane into the mitochondrial matrix in an ATP-dependent manner. Seems to control the nucleotide-dependent binding of mitochondrial HSP70 to substrate proteins. This is GrpE protein homolog, mitochondrial (Roe1) from Drosophila melanogaster (Fruit fly).